Here is a 602-residue protein sequence, read N- to C-terminus: Elongation factor 4 (602 aa).

In terms of domain architecture, tr-type G spans Lys-7–Val-189. GTP-binding positions include Asp-19–Thr-24 and Asn-136–Asp-139.

The protein belongs to the TRAFAC class translation factor GTPase superfamily. Classic translation factor GTPase family. LepA subfamily.

It localises to the cell inner membrane. It carries out the reaction GTP + H2O = GDP + phosphate + H(+). Required for accurate and efficient protein synthesis under certain stress conditions. May act as a fidelity factor of the translation reaction, by catalyzing a one-codon backward translocation of tRNAs on improperly translocated ribosomes. Back-translocation proceeds from a post-translocation (POST) complex to a pre-translocation (PRE) complex, thus giving elongation factor G a second chance to translocate the tRNAs correctly. Binds to ribosomes in a GTP-dependent manner. The polypeptide is Elongation factor 4 (Coxiella burnetii (strain Dugway 5J108-111)).